We begin with the raw amino-acid sequence, 217 residues long: MESVALYSFQATESDELAFNKGDTLKILNMEDDQNWYKAELRGVEGFIPKNYIRVKPHPWYSGRISRQLAEEILMKRNHLGAFLIRESESSPGEFSVSVNYGDQVQHFKVLREASGKYFLWEEKFNSLNELVDFYRTTTIAKKRQIFLRDEEPLLKSPGACFAQAQFDFSAQDPSQLSFRRGDIIEVLERPDPHWWRGRSCGRVGFFPRSYVQPVHL.

The SH3 1 domain occupies 1–58 (MESVALYSFQATESDELAFNKGDTLKILNMEDDQNWYKAELRGVEGFIPKNYIRVKPH). The 95-residue stretch at 60-154 (WYSGRISRQL…QIFLRDEEPL (95 aa)) folds into the SH2 domain. One can recognise an SH3 2 domain in the interval 158-217 (PGACFAQAQFDFSAQDPSQLSFRRGDIIEVLERPDPHWWRGRSCGRVGFFPRSYVQPVHL).

Belongs to the GRB2/sem-5/DRK family. In terms of assembly, associates through its SH2 domain with ligand-activated receptors for stem cell factor (KIT) and erythropoietin (EPOR). Also forms a stable complex with the Bcr-Abl oncoprotein. GRAP is associated with the Ras guanine nucleotide exchange factor SOS1, primarily through its N-terminal SH3 domain. Interacts with phosphorylated LAT upon TCR activation. Interacts with SHB.

It localises to the membrane. Its subcellular location is the synapse. In terms of biological role, couples signals from receptor and cytoplasmic tyrosine kinases to the Ras signaling pathway. Plays a role in the inner ear and in hearing. This is GRB2-related adapter protein from Homo sapiens (Human).